Reading from the N-terminus, the 157-residue chain is Rieske domain-containing protein (157 aa).

Residue Met1 is modified to N-acetylmethionine. Ser6 carries the post-translational modification Phosphoserine. Rieske domains lie at 16-127 (TSVC…VDNG) and 17-131 (SVCV…NIYV). [2Fe-2S] cluster-binding residues include Cys57, His59, Cys80, and His83.

[2Fe-2S] cluster is required as a cofactor.

The protein is Rieske domain-containing protein (Rfesd) of Mus musculus (Mouse).